Reading from the N-terminus, the 35-residue chain is LPKPPLLPPPVPGLAPGLPPLPVPDPVPHPPKKPP.

Residues 1-29 (LPKPPLLPPPVPGLAPGLPPLPVPDPVPH) show a composition bias toward pro residues. The interval 1–35 (LPKPPLLPPPVPGLAPGLPPLPVPDPVPHPPKKPP) is disordered. Residues Pro5, Pro9, Pro10, Pro12, Pro16, Pro20, Pro31, and Pro35 each carry the hydroxyproline modification.

O-glycosylated; contains pentose side chains at some or all of the hydroxyproline residues. Glycosylation is required for full antifungal activity.

In terms of biological role, antimicrobial peptide. Inhibits elongation of hyphae in B.sorokiniana (IC(50)=3.8 uM) but has no effect on this process or on germination of conidia in a panel of other phytopathogenic fungi. At concentrations above 10 uM, has antibacterial activity. The sequence is that of Peptide ToHyp2 from Taraxacum officinale (Common dandelion).